The sequence spans 213 residues: 3-demethoxyubiquinol 3-hydroxylase (213 aa).

6 residues coordinate Fe cation: glutamate 62, glutamate 92, histidine 95, glutamate 144, glutamate 176, and histidine 179.

It belongs to the COQ7 family. Requires Fe cation as cofactor.

The protein localises to the cell membrane. It carries out the reaction a 5-methoxy-2-methyl-3-(all-trans-polyprenyl)benzene-1,4-diol + AH2 + O2 = a 3-demethylubiquinol + A + H2O. Its pathway is cofactor biosynthesis; ubiquinone biosynthesis. Catalyzes the hydroxylation of 2-nonaprenyl-3-methyl-6-methoxy-1,4-benzoquinol during ubiquinone biosynthesis. This is 3-demethoxyubiquinol 3-hydroxylase from Chromohalobacter salexigens (strain ATCC BAA-138 / DSM 3043 / CIP 106854 / NCIMB 13768 / 1H11).